The following is an 89-amino-acid chain: Small ribosomal subunit protein uS15 (89 aa).

Belongs to the universal ribosomal protein uS15 family. As to quaternary structure, part of the 30S ribosomal subunit. Forms a bridge to the 50S subunit in the 70S ribosome, contacting the 23S rRNA.

One of the primary rRNA binding proteins, it binds directly to 16S rRNA where it helps nucleate assembly of the platform of the 30S subunit by binding and bridging several RNA helices of the 16S rRNA. Functionally, forms an intersubunit bridge (bridge B4) with the 23S rRNA of the 50S subunit in the ribosome. In Lactobacillus gasseri (strain ATCC 33323 / DSM 20243 / BCRC 14619 / CIP 102991 / JCM 1131 / KCTC 3163 / NCIMB 11718 / NCTC 13722 / AM63), this protein is Small ribosomal subunit protein uS15.